The following is a 912-amino-acid chain: Coiled-coil domain-containing protein 162 (912 aa).

Coiled-coil stretches lie at residues 1–35 (MFKSLPEEEAFRALTLTLQLVASLHDIVAYTFSFA) and 220–276 (VLLG…VVMS).

The sequence is that of Coiled-coil domain-containing protein 162 from Mus musculus (Mouse).